The sequence spans 184 residues: Photosystem I assembly protein Ycf4 (184 aa).

2 helical membrane-spanning segments follow: residues 19 to 39 (LSNFCWALILFLGSLGFLLVG) and 57 to 77 (FIFFPQGIVMSFYGIAGLFIS).

Belongs to the Ycf4 family.

Its subcellular location is the plastid. It is found in the chloroplast thylakoid membrane. Seems to be required for the assembly of the photosystem I complex. This is Photosystem I assembly protein Ycf4 from Jasminum nudiflorum (Winter jasmine).